The chain runs to 420 residues: UDP-N-acetylglucosamine 1-carboxyvinyltransferase (420 aa).

22-23 (KN) provides a ligand contact to phosphoenolpyruvate. Arg-91 serves as a coordination point for UDP-N-acetyl-alpha-D-glucosamine. Residue Cys-115 is the Proton donor of the active site. Position 115 is a 2-(S-cysteinyl)pyruvic acid O-phosphothioketal (Cys-115). UDP-N-acetyl-alpha-D-glucosamine is bound by residues 120–124 (RPVDL), 160–163 (KVSV), Asp-305, and Ile-327.

The protein belongs to the EPSP synthase family. MurA subfamily.

It is found in the cytoplasm. The enzyme catalyses phosphoenolpyruvate + UDP-N-acetyl-alpha-D-glucosamine = UDP-N-acetyl-3-O-(1-carboxyvinyl)-alpha-D-glucosamine + phosphate. It functions in the pathway cell wall biogenesis; peptidoglycan biosynthesis. Its function is as follows. Cell wall formation. Adds enolpyruvyl to UDP-N-acetylglucosamine. This is UDP-N-acetylglucosamine 1-carboxyvinyltransferase from Pectobacterium carotovorum subsp. carotovorum (strain PC1).